The following is a 564-amino-acid chain: Mitochondrial distribution and morphology protein 34 (564 aa).

The SMP-LTD domain occupies 1–208 (MAFNFNWSPL…VPEYRDRESE (208 aa)). Disordered stretches follow at residues 208–240 (ESVNTLDQSSGPGQDPLASPPQDPVDASGNALN), 336–397 (SGGS…SAPT), 404–423 (QFSEEKNDDPVTPPLAPQND), 434–517 (RISQ…DPRQ), and 532–564 (IQEEKVGPSGSRPFPDFWDDHSREEIPPPAYGH). Residues 209-219 (SVNTLDQSSGP) show a composition bias toward polar residues. Basic residues predominate over residues 351–365 (SGRHPRPHGKKRKKR). Positions 366 to 376 (VVDLRRPKTTD) are enriched in basic and acidic residues. The span at 380 to 390 (SVSGESVFSSE) shows a compositional bias: low complexity. Composition is skewed to polar residues over residues 438–462 (GEHTLTRRSVPSMSEVAQPSSSRNS) and 477–503 (PRNSIRLPSSDRANNPLTTAHLPSSAI).

Belongs to the MDM34 family. Component of the ER-mitochondria encounter structure (ERMES) or MDM complex, composed of mmm1, mdm10, mdm12 and mdm34.

The protein resides in the mitochondrion outer membrane. Its function is as follows. Component of the ERMES/MDM complex, which serves as a molecular tether to connect the endoplasmic reticulum (ER) and mitochondria. Components of this complex are involved in the control of mitochondrial shape and protein biogenesis, and function in nonvesicular lipid trafficking between the ER and mitochondria. Mdm34 is required for the interaction of the ER-resident membrane protein mmm1 and the outer mitochondrial membrane-resident beta-barrel protein mdm10. This Talaromyces stipitatus (strain ATCC 10500 / CBS 375.48 / QM 6759 / NRRL 1006) (Penicillium stipitatum) protein is Mitochondrial distribution and morphology protein 34.